The chain runs to 771 residues: Carnitine O-palmitoyltransferase 1, muscle isoform (771 aa).

Residues 1-47 lie on the Cytoplasmic side of the membrane; sequence MAEAHQAVAFQFTVTPEGVDFQLSREVLKHIYLSVIRSWKKRLIRIK. The chain crosses the membrane as a helical span at residues 48–73; sequence NGILRGVYPGSPTSWLVVVMATAGSS. The Mitochondrial intermembrane segment spans residues 74-101; sequence YYNVDISMGLVYYIQRWLPEGRPYRTPY. Residues 102–121 traverse the membrane as a helical segment; it reads TRTLFSMAIFSTGVWMMGIF. The Cytoplasmic portion of the chain corresponds to 122–771; the sequence is FFRQTLKLLL…NLFQVPKADG (650 aa). His472 acts as the Proton acceptor in catalysis. A CoA-binding site is contributed by 554–566; the sequence is GKGLIKKCRTSPD. (R)-carnitine contacts are provided by Tyr588 and Thr601.

The protein belongs to the carnitine/choline acetyltransferase family.

Its subcellular location is the mitochondrion outer membrane. The enzyme catalyses (R)-carnitine + hexadecanoyl-CoA = O-hexadecanoyl-(R)-carnitine + CoA. It participates in lipid metabolism; fatty acid beta-oxidation. In terms of biological role, catalyzes the transfer of the acyl group of long-chain fatty acid-CoA conjugates onto carnitine, an essential step for the mitochondrial uptake of long-chain fatty acids and their subsequent beta-oxidation in the mitochondrion. The polypeptide is Carnitine O-palmitoyltransferase 1, muscle isoform (CPT1B) (Bos taurus (Bovine)).